A 230-amino-acid polypeptide reads, in one-letter code: UPF0494 membrane protein C1348.07 (230 aa).

3 helical membrane-spanning segments follow: residues 78–98 (WPLL…NFEV), 120–140 (IWGP…GLIY), and 148–168 (AIPL…VAMV).

This sequence belongs to the UPF0494 family.

The protein resides in the vacuole. Its subcellular location is the membrane. In Schizosaccharomyces pombe (strain 972 / ATCC 24843) (Fission yeast), this protein is UPF0494 membrane protein C1348.07.